A 390-amino-acid chain; its full sequence is 1-deoxy-D-xylulose 5-phosphate reductoisomerase (390 aa).

The NADPH site is built by T10, G11, S12, I13, G36, R37, N38, and N121. 1-deoxy-D-xylulose 5-phosphate is bound at residue K122. E123 serves as a coordination point for NADPH. D147 contributes to the Mn(2+) binding site. Residues S148, E149, S173, and H196 each coordinate 1-deoxy-D-xylulose 5-phosphate. E149 contacts Mn(2+). Position 202 (G202) interacts with NADPH. 1-deoxy-D-xylulose 5-phosphate-binding residues include S209, N214, K215, and E218. E218 lines the Mn(2+) pocket. A disordered region spans residues 367-390 (AASEHGRREAEKRVGARAHAPASR). The span at 370-380 (EHGRREAEKRV) shows a compositional bias: basic and acidic residues.

This sequence belongs to the DXR family. It depends on Mg(2+) as a cofactor. Mn(2+) serves as cofactor.

The enzyme catalyses 2-C-methyl-D-erythritol 4-phosphate + NADP(+) = 1-deoxy-D-xylulose 5-phosphate + NADPH + H(+). The protein operates within isoprenoid biosynthesis; isopentenyl diphosphate biosynthesis via DXP pathway; isopentenyl diphosphate from 1-deoxy-D-xylulose 5-phosphate: step 1/6. Its function is as follows. Catalyzes the NADPH-dependent rearrangement and reduction of 1-deoxy-D-xylulose-5-phosphate (DXP) to 2-C-methyl-D-erythritol 4-phosphate (MEP). This is 1-deoxy-D-xylulose 5-phosphate reductoisomerase from Anaeromyxobacter dehalogenans (strain 2CP-1 / ATCC BAA-258).